We begin with the raw amino-acid sequence, 421 residues long: Gamma-glutamyl phosphate reductase (421 aa).

Belongs to the gamma-glutamyl phosphate reductase family.

Its subcellular location is the cytoplasm. It carries out the reaction L-glutamate 5-semialdehyde + phosphate + NADP(+) = L-glutamyl 5-phosphate + NADPH + H(+). The protein operates within amino-acid biosynthesis; L-proline biosynthesis; L-glutamate 5-semialdehyde from L-glutamate: step 2/2. Functionally, catalyzes the NADPH-dependent reduction of L-glutamate 5-phosphate into L-glutamate 5-semialdehyde and phosphate. The product spontaneously undergoes cyclization to form 1-pyrroline-5-carboxylate. The sequence is that of Gamma-glutamyl phosphate reductase from Pseudomonas syringae pv. tomato (strain ATCC BAA-871 / DC3000).